A 118-amino-acid polypeptide reads, in one-letter code: Non-specific lipid-transfer protein 5 (118 aa).

Residues M1 to A25 form the signal peptide. Intrachain disulfides connect C29–C76, C39–C53, C54–C100, and C74–C114.

Belongs to the plant LTP family.

Its function is as follows. Plant non-specific lipid-transfer proteins transfer phospholipids as well as galactolipids across membranes. May play a role in wax or cutin deposition in the cell walls of expanding epidermal cells and certain secretory tissues. The polypeptide is Non-specific lipid-transfer protein 5 (LTP5) (Arabidopsis thaliana (Mouse-ear cress)).